We begin with the raw amino-acid sequence, 286 residues long: ATP synthase gamma chain (286 aa).

This sequence belongs to the ATPase gamma chain family. F-type ATPases have 2 components, CF(1) - the catalytic core - and CF(0) - the membrane proton channel. CF(1) has five subunits: alpha(3), beta(3), gamma(1), delta(1), epsilon(1). CF(0) has three main subunits: a, b and c.

The protein resides in the cell inner membrane. Its function is as follows. Produces ATP from ADP in the presence of a proton gradient across the membrane. The gamma chain is believed to be important in regulating ATPase activity and the flow of protons through the CF(0) complex. The chain is ATP synthase gamma chain from Pseudomonas fluorescens (strain Pf0-1).